The chain runs to 187 residues: Elongation factor P (187 aa).

It belongs to the elongation factor P family.

Its subcellular location is the cytoplasm. The protein operates within protein biosynthesis; polypeptide chain elongation. Its function is as follows. Involved in peptide bond synthesis. Stimulates efficient translation and peptide-bond synthesis on native or reconstituted 70S ribosomes in vitro. Probably functions indirectly by altering the affinity of the ribosome for aminoacyl-tRNA, thus increasing their reactivity as acceptors for peptidyl transferase. This chain is Elongation factor P, found in Mycobacterium avium (strain 104).